We begin with the raw amino-acid sequence, 387 residues long: uncharacterized protein (387 aa).

Belongs to the geranylgeranyl reductase family. ChlP subfamily.

This is an uncharacterized protein from Methanosarcina barkeri (strain Fusaro / DSM 804).